We begin with the raw amino-acid sequence, 71 residues long: uncharacterized protein (71 aa).

This is an uncharacterized protein from Bacillus subtilis (strain 168).